A 203-amino-acid polypeptide reads, in one-letter code: Large ribosomal subunit protein uL18 (203 aa).

The protein belongs to the universal ribosomal protein uL18 family. In terms of assembly, part of the 50S ribosomal subunit. Contacts the 5S and 23S rRNAs.

This is one of the proteins that bind and probably mediate the attachment of the 5S RNA into the large ribosomal subunit, where it forms part of the central protuberance. The sequence is that of Large ribosomal subunit protein uL18 from Pyrococcus abyssi (strain GE5 / Orsay).